Reading from the N-terminus, the 149-residue chain is MTSFKLVKYIPRIKKKKSGLRKLARKVPTDRLLKFERVFKAQKRIPMSVFKAQRVLDEIRWRYYEETVMILNLMPYRASYPILKLVYSAAANATHYRDFDKANLFITKAEVSRSTIMKKFRPRARGRSFPIKKSMCHITIVLNIVKKSK.

This sequence belongs to the universal ribosomal protein uL22 family. Part of the 50S ribosomal subunit.

Its subcellular location is the plastid. It is found in the chloroplast. Its function is as follows. This protein binds specifically to 23S rRNA. In terms of biological role, the globular domain of the protein is located near the polypeptide exit tunnel on the outside of the subunit, while an extended beta-hairpin is found that lines the wall of the exit tunnel in the center of the 70S ribosome. The protein is Large ribosomal subunit protein uL22c (rpl22) of Hordeum vulgare (Barley).